The following is a 296-amino-acid chain: Acetylglutamate kinase (296 aa).

Substrate is bound by residues 67–68 (GG), R89, and N194.

It belongs to the acetylglutamate kinase family. ArgB subfamily.

It localises to the cytoplasm. It catalyses the reaction N-acetyl-L-glutamate + ATP = N-acetyl-L-glutamyl 5-phosphate + ADP. The protein operates within amino-acid biosynthesis; L-arginine biosynthesis; N(2)-acetyl-L-ornithine from L-glutamate: step 2/4. Catalyzes the ATP-dependent phosphorylation of N-acetyl-L-glutamate. The sequence is that of Acetylglutamate kinase from Brucella abortus (strain S19).